A 579-amino-acid chain; its full sequence is Alpha-longipinene synthase (579 aa).

Positions 332, 336, 476, and 484 each coordinate Mg(2+). Positions 332 to 336 (DDLYD) match the DDXXD motif motif.

It belongs to the terpene synthase family. Tpsd subfamily. Mg(2+) serves as cofactor. Mn(2+) is required as a cofactor.

The enzyme catalyses (2E,6E)-farnesyl diphosphate = alpha-longipinene + diphosphate. The protein operates within sesquiterpene biosynthesis. Its pathway is terpene metabolism; oleoresin biosynthesis. Terpene synthase (TPS) involved in the biosynthesis of sesquiterpene natural products included in conifer oleoresin secretions and volatile emissions; these compounds contribute to biotic and abiotic stress defense against herbivores and pathogens. Catalyzes the conversion of (2E,6E)-farnesyl diphosphate (FPP) to alpha-longipinene. This is Alpha-longipinene synthase from Picea sitchensis (Sitka spruce).